A 61-amino-acid chain; its full sequence is Large ribosomal subunit protein uL30 (61 aa).

This sequence belongs to the universal ribosomal protein uL30 family. As to quaternary structure, part of the 50S ribosomal subunit.

This is Large ribosomal subunit protein uL30 from Treponema pallidum subsp. pallidum (strain SS14).